The sequence spans 275 residues: Dermonecrotic toxin LarSicTox-alphaIII1 (275 aa).

H5 is a catalytic residue. 2 residues coordinate Mg(2+): E25 and D27. H41 serves as the catalytic Nucleophile. Intrachain disulfides connect C45–C51 and C47–C190. D85 provides a ligand contact to Mg(2+). N-linked (GlcNAc...) asparagine glycosylation occurs at N252.

Belongs to the arthropod phospholipase D family. Class II subfamily. The cofactor is Mg(2+). In terms of tissue distribution, expressed by the venom gland.

Its subcellular location is the secreted. It carries out the reaction an N-(acyl)-sphingosylphosphocholine = an N-(acyl)-sphingosyl-1,3-cyclic phosphate + choline. The catalysed reaction is an N-(acyl)-sphingosylphosphoethanolamine = an N-(acyl)-sphingosyl-1,3-cyclic phosphate + ethanolamine. It catalyses the reaction a 1-acyl-sn-glycero-3-phosphocholine = a 1-acyl-sn-glycero-2,3-cyclic phosphate + choline. The enzyme catalyses a 1-acyl-sn-glycero-3-phosphoethanolamine = a 1-acyl-sn-glycero-2,3-cyclic phosphate + ethanolamine. Its function is as follows. Dermonecrotic toxins cleave the phosphodiester linkage between the phosphate and headgroup of certain phospholipids (sphingolipid and lysolipid substrates), forming an alcohol (often choline) and a cyclic phosphate. This toxin acts on sphingomyelin (SM). It may also act on ceramide phosphoethanolamine (CPE), lysophosphatidylcholine (LPC) and lysophosphatidylethanolamine (LPE), but not on lysophosphatidylserine (LPS), and lysophosphatidylglycerol (LPG). It acts by transphosphatidylation, releasing exclusively cyclic phosphate products as second products. Induces dermonecrosis, hemolysis, increased vascular permeability, edema, inflammatory response, and platelet aggregation. This Loxosceles arizonica (Arizona brown spider) protein is Dermonecrotic toxin LarSicTox-alphaIII1.